We begin with the raw amino-acid sequence, 819 residues long: Transferrin 2 (819 aa).

The first 21 residues, 1-21, serve as a signal peptide directing secretion; the sequence is MASSLVFVALVGALCFTLANA. The Transferrin-like 1 domain maps to 33–373; sequence MVWCTKSQAE…QYDQYRSERL (341 aa). 2 disulfide bridges follow: Cys-36–Cys-78 and Cys-46–Cys-69. Residues Asn-48 and Asn-66 are each glycosylated (N-linked (GlcNAc...) asparagine). 2 residues coordinate Fe(3+): Asp-93 and Tyr-121. 3 disulfides stabilise this stretch: Cys-147–Cys-237, Cys-190–Cys-213, and Cys-273–Cys-287. Hydrogencarbonate is bound by residues Ala-155 and Gly-156. N-linked (GlcNAc...) asparagine glycosylation is present at Asn-187. Tyr-231 serves as a coordination point for Fe(3+). Residues 325–361 are disordered; that stretch reads GTRDDQSRQGGQSFNSRNNINDQNAYGQFDNNDPYRT. Residues 332 to 361 show a composition bias toward polar residues; the sequence is RQGGQSFNSRNNINDQNAYGQFDNNDPYRT. A glycan (N-linked (GlcNAc...) asparagine) is linked at Asn-388. The Transferrin-like 2 domain occupies 450 to 796; it reads MTLCVTSENE…FMRARRITDC (347 aa). 2 disulfide bridges follow: Cys-453-Cys-490 and Cys-463-Cys-481. Fe(3+) is bound by residues Asp-505 and Tyr-533. 4 disulfide bridges follow: Cys-557/Cys-646, Cys-599/Cys-621, Cys-618/Cys-629, and Cys-687/Cys-701. 3 residues coordinate hydrogencarbonate: Thr-559, Ala-565, and Gly-566. Asn-720 carries an N-linked (GlcNAc...) asparagine glycan. Cys-796 is lipidated: GPI-anchor amidated cysteine. Residues 797-819 constitute a propeptide, removed in mature form; it reads YAGASQLALSVGLLLVGSLVAML.

This sequence belongs to the transferrin family. As to quaternary structure, forms a complex composed of septa junction proteins Nrx-IV/Nrx, Tsf2/MTf, Cont and Nrg during late embryogenesis.

The protein localises to the apicolateral cell membrane. The protein resides in the cell junction. It localises to the septate junction. Iron-binding protein and component of septate junctions that form the paracellular permeability barrier in epithelial tissues. In an iron-dependent manner, required for septate junction assembly during epithelial maturation in embryos and mature septa junctions stability. The sequence is that of Transferrin 2 from Drosophila melanogaster (Fruit fly).